The chain runs to 221 residues: Ras-related protein Rab-27A (221 aa).

Serine 2 is subject to N-acetylserine. Serine 2 bears the Phosphoserine mark. Position 16–24 (16–24 (GDSGVGKTS)) interacts with GTP. Positions 38–46 (FITTVGIDF) match the Effector region motif. GTP is bound by residues 74–78 (DTAGQ), 133–136 (NKSD), and 163–165 (SAA). Cysteines 123 and 188 form a disulfide. 2 S-geranylgeranyl cysteine lipidation sites follow: cysteine 219 and cysteine 221. Cysteine 221 bears the Cysteine methyl ester mark.

Belongs to the small GTPase superfamily. Rab family. In terms of assembly, binds SYTL1, SLAC2B, MYRIP, SYTL3, SYTL4 and SYTL5. Interacts with RPH3A and RPH3A. Binds MLPH and SYTL2. Interacts with UNC13D. Does not interact with the BLOC-3 complex (heterodimer of HPS1 and HPS4). Interacts (GDP-bound form preferentially) with DENND10. As to expression, found in all the examined tissues except in brain. Low expression was found in thymus, kidney, muscle and placenta. Detected in melanocytes, and in most tumor cell lines examined. Expressed in cytotoxic T-lymphocytes (CTL) and mast cells.

Its subcellular location is the membrane. It is found in the melanosome. It localises to the late endosome. The protein localises to the lysosome. The catalysed reaction is GTP + H2O = GDP + phosphate + H(+). Its activity is regulated as follows. Regulated by guanine nucleotide exchange factors (GEFs) which promote the exchange of bound GDP for free GTP, GTPase activating proteins (GAPs) which increase the GTP hydrolysis activity, and GDP dissociation inhibitors which inhibit the dissociation of the nucleotide from the GTPase. Activated by GEFs such as DENND10. In terms of biological role, small GTPase which cycles between active GTP-bound and inactive GDP-bound states. In its active state, binds to a variety of effector proteins to regulate homeostasis of late endocytic pathway, including endosomal positioning, maturation and secretion. Plays a role in cytotoxic granule exocytosis in lymphocytes. Required for both granule maturation and granule docking and priming at the immunologic synapse. This Homo sapiens (Human) protein is Ras-related protein Rab-27A (RAB27A).